Consider the following 62-residue polypeptide: Large ribosomal subunit protein bL28 (62 aa).

The interval 1–28 (MARVCTITGRKARSGNSRSHAMNATKRK) is disordered.

The protein belongs to the bacterial ribosomal protein bL28 family.

In Bacillus anthracis (strain CDC 684 / NRRL 3495), this protein is Large ribosomal subunit protein bL28.